Reading from the N-terminus, the 391-residue chain is S-adenosylmethionine synthase (391 aa).

An ATP-binding site is contributed by His-14. Asp-16 serves as a coordination point for Mg(2+). Glu-42 contributes to the K(+) binding site. The L-methionine site is built by Glu-55 and Gln-98. The flexible loop stretch occupies residues 98–108; that stretch reads QSVDIAMGVDE. ATP contacts are provided by residues 172-174, 238-239, Asp-247, 253-254, Ala-270, and Lys-274; these read DGK, RF, and RK. Asp-247 is an L-methionine binding site. Lys-278 contributes to the L-methionine binding site.

This sequence belongs to the AdoMet synthase family. As to quaternary structure, homotetramer; dimer of dimers. It depends on Mg(2+) as a cofactor. The cofactor is K(+).

The protein resides in the cytoplasm. It carries out the reaction L-methionine + ATP + H2O = S-adenosyl-L-methionine + phosphate + diphosphate. It participates in amino-acid biosynthesis; S-adenosyl-L-methionine biosynthesis; S-adenosyl-L-methionine from L-methionine: step 1/1. In terms of biological role, catalyzes the formation of S-adenosylmethionine (AdoMet) from methionine and ATP. The overall synthetic reaction is composed of two sequential steps, AdoMet formation and the subsequent tripolyphosphate hydrolysis which occurs prior to release of AdoMet from the enzyme. This is S-adenosylmethionine synthase from Clostridium botulinum (strain Kyoto / Type A2).